Reading from the N-terminus, the 356-residue chain is Protein RecA (356 aa).

68–75 provides a ligand contact to ATP; that stretch reads GQESSGKT.

It belongs to the RecA family.

Its subcellular location is the cytoplasm. Its function is as follows. Can catalyze the hydrolysis of ATP in the presence of single-stranded DNA, the ATP-dependent uptake of single-stranded DNA by duplex DNA, and the ATP-dependent hybridization of homologous single-stranded DNAs. It interacts with LexA causing its activation and leading to its autocatalytic cleavage. This chain is Protein RecA, found in Thermotoga petrophila (strain ATCC BAA-488 / DSM 13995 / JCM 10881 / RKU-1).